Reading from the N-terminus, the 101-residue chain is NADH-quinone oxidoreductase subunit K (101 aa).

The next 3 membrane-spanning stretches (helical) occupy residues 4-24 (LAHF…GIFL), 30-50 (IVLL…FVAF), and 61-81 (VFVF…LAIL).

The protein belongs to the complex I subunit 4L family. In terms of assembly, NDH-1 is composed of 14 different subunits. Subunits NuoA, H, J, K, L, M, N constitute the membrane sector of the complex.

It is found in the cell inner membrane. It catalyses the reaction a quinone + NADH + 5 H(+)(in) = a quinol + NAD(+) + 4 H(+)(out). Functionally, NDH-1 shuttles electrons from NADH, via FMN and iron-sulfur (Fe-S) centers, to quinones in the respiratory chain. The immediate electron acceptor for the enzyme in this species is believed to be ubiquinone. Couples the redox reaction to proton translocation (for every two electrons transferred, four hydrogen ions are translocated across the cytoplasmic membrane), and thus conserves the redox energy in a proton gradient. The chain is NADH-quinone oxidoreductase subunit K from Cupriavidus taiwanensis (strain DSM 17343 / BCRC 17206 / CCUG 44338 / CIP 107171 / LMG 19424 / R1) (Ralstonia taiwanensis (strain LMG 19424)).